Reading from the N-terminus, the 160-residue chain is Glyoxalase domain-containing protein 5 (160 aa).

Residues 33 to 153 enclose the VOC domain; it reads RLDHLVLTVR…DHNLIEVSNY (121 aa).

This sequence belongs to the glyoxalase I family.

This chain is Glyoxalase domain-containing protein 5 (glod5), found in Xenopus laevis (African clawed frog).